Here is a 350-residue protein sequence, read N- to C-terminus: Holliday junction branch migration complex subunit RuvB (350 aa).

Residues Met-1–Tyr-182 form a large ATPase domain (RuvB-L) region. ATP contacts are provided by residues Leu-21, Arg-22, Gly-63, Lys-66, Thr-67, Thr-68, Glu-129–Tyr-131, Arg-172, Tyr-182, and Arg-219. Thr-67 provides a ligand contact to Mg(2+). Residues Asp-183–Glu-253 form a small ATPAse domain (RuvB-S) region. The tract at residues Lys-256–Val-350 is head domain (RuvB-H). Arg-311 and Arg-316 together coordinate DNA.

It belongs to the RuvB family. In terms of assembly, homohexamer. Forms an RuvA(8)-RuvB(12)-Holliday junction (HJ) complex. HJ DNA is sandwiched between 2 RuvA tetramers; dsDNA enters through RuvA and exits via RuvB. An RuvB hexamer assembles on each DNA strand where it exits the tetramer. Each RuvB hexamer is contacted by two RuvA subunits (via domain III) on 2 adjacent RuvB subunits; this complex drives branch migration. In the full resolvosome a probable DNA-RuvA(4)-RuvB(12)-RuvC(2) complex forms which resolves the HJ.

Its subcellular location is the cytoplasm. The enzyme catalyses ATP + H2O = ADP + phosphate + H(+). The RuvA-RuvB-RuvC complex processes Holliday junction (HJ) DNA during genetic recombination and DNA repair, while the RuvA-RuvB complex plays an important role in the rescue of blocked DNA replication forks via replication fork reversal (RFR). RuvA specifically binds to HJ cruciform DNA, conferring on it an open structure. The RuvB hexamer acts as an ATP-dependent pump, pulling dsDNA into and through the RuvAB complex. RuvB forms 2 homohexamers on either side of HJ DNA bound by 1 or 2 RuvA tetramers; 4 subunits per hexamer contact DNA at a time. Coordinated motions by a converter formed by DNA-disengaged RuvB subunits stimulates ATP hydrolysis and nucleotide exchange. Immobilization of the converter enables RuvB to convert the ATP-contained energy into a lever motion, pulling 2 nucleotides of DNA out of the RuvA tetramer per ATP hydrolyzed, thus driving DNA branch migration. The RuvB motors rotate together with the DNA substrate, which together with the progressing nucleotide cycle form the mechanistic basis for DNA recombination by continuous HJ branch migration. Branch migration allows RuvC to scan DNA until it finds its consensus sequence, where it cleaves and resolves cruciform DNA. This chain is Holliday junction branch migration complex subunit RuvB, found in Clostridium kluyveri (strain NBRC 12016).